The sequence spans 228 residues: NOI-like protein (228 aa).

Residues 56 to 75 (AQDHQHSEKHHNDTSTDYHV) are compositionally biased toward basic and acidic residues. Disordered regions lie at residues 56-87 (AQDHQHSEKHHNDTSTDYHVVKQHRRKHHRRE) and 99-133 (RPHRSPFQGVDMDSHRSRNHGTSATMSSSVKRNSD). Basic residues predominate over residues 76–86 (VKQHRRKHHRR). The segment covering 118 to 133 (HGTSATMSSSVKRNSD) has biased composition (polar residues).

The protein belongs to the RIN4 family.

The protein is NOI-like protein of Elaeis oleifera (American oil palm).